Reading from the N-terminus, the 564-residue chain is MFS-type efflux transporter ffsH (564 aa).

Basic and acidic residues predominate over residues 1 to 18 (MSEAEKKASQDAQHKEPM). Residues 1 to 37 (MSEAEKKASQDAQHKEPMADSETQLDSDSAPSSQAEK) are disordered. The span at 21 to 35 (SETQLDSDSAPSSQA) shows a compositional bias: polar residues. Helical transmembrane passes span 43 to 63 (YPLS…ISAM), 98 to 118 (YVMI…GGAN), 131 to 151 (GIGA…LVPM), and 157 to 177 (FIGL…IIGG). Asparagine 182 carries N-linked (GlcNAc...) asparagine glycosylation. 9 helical membrane-spanning segments follow: residues 187-207 (WVFY…VLFL), 226-246 (VVGN…LTYG), 254-274 (AANI…FIAW), 300-320 (FFIS…YPVY), 334-354 (VHLL…GGLV), 362-382 (PIHM…SVLT), 389-409 (AWAV…STTL), 427-447 (TWAY…AAIF), and 502-522 (VWLV…FEKE). Residues 540–564 (GDAKGDVERGEGQNDSREGGQNENV) are disordered. Residue asparagine 553 is glycosylated (N-linked (GlcNAc...) asparagine).

Belongs to the major facilitator superfamily.

The protein resides in the cell membrane. In terms of biological role, MFS-type efflux transporter; part of the gene cluster that mediates the biosynthesis of the cytotoxic leucine-containing cytochalasans, including aspochalasin C, aspochalasin E, TMC-169, flavichalasine F, aspergillin PZ, aspochalasin M and flavichalasine G. FfsH might be involved in the excretion of cytochalasans. The polypeptide is MFS-type efflux transporter ffsH (Aspergillus flavipes).